Here is a 153-residue protein sequence, read N- to C-terminus: Large ribosomal subunit protein bL9 (153 aa).

Belongs to the bacterial ribosomal protein bL9 family.

Its function is as follows. Binds to the 23S rRNA. The polypeptide is Large ribosomal subunit protein bL9 (Micrococcus luteus (strain ATCC 4698 / DSM 20030 / JCM 1464 / CCM 169 / CCUG 5858 / IAM 1056 / NBRC 3333 / NCIMB 9278 / NCTC 2665 / VKM Ac-2230) (Micrococcus lysodeikticus)).